Reading from the N-terminus, the 491-residue chain is MNTQQLAKLRSIVPEMRRVRHIHFVGIGGAGMGGIAEVLANEGYQISGSDLAPNPVTQQLTSLGATIFFNHRPENVRDASVVVVSSAISADNPEIVAAHEARIPVIRRAEMLAELMRFRHGIAIAGTHGKTTTTAMVSSIYAEAGLDPTFVNGGLVKAAGVHARLGHSRYLIAEADESDASFLHLQPMVAIVTNIEADHMDTYHGDFENLKQTFINFLHNLPFYGRAVMCVDDPVIRELLPRVGRQTTTYGFSEDADVRVEDYQQIGPQGHFTLLRQGMPDLHVTLNAPGRHNALNAAAAVAVATEEGIDDDAILRALESFQGTGRRFDFLGEFPLEPVNGKAGTAMLVDDYGHHPTEVDATIKAARAGWPDKKLVMLFQPHRYTRTRDLYDDFANVLTQVDALLMLDVYPAGEAPIPGADSRSLCRTIRNRGKIDPILVSDPAQVATMLAPVLTGNDLILVQGAGNVGKIARYLSEIKLKPQIQEEEQHG.

126-132 (GTHGKTT) contacts ATP.

Belongs to the MurCDEF family.

The protein localises to the cytoplasm. The catalysed reaction is UDP-N-acetyl-alpha-D-muramate + L-alanine + ATP = UDP-N-acetyl-alpha-D-muramoyl-L-alanine + ADP + phosphate + H(+). It functions in the pathway cell wall biogenesis; peptidoglycan biosynthesis. Functionally, cell wall formation. This chain is UDP-N-acetylmuramate--L-alanine ligase, found in Salmonella paratyphi C (strain RKS4594).